Here is a 264-residue protein sequence, read N- to C-terminus: 3-methyl-2-oxobutanoate hydroxymethyltransferase (264 aa).

Positions 45 and 84 each coordinate Mg(2+). 3-methyl-2-oxobutanoate is bound by residues 45–46, Asp84, and Lys112; that span reads DS. Glu114 contacts Mg(2+). Glu181 acts as the Proton acceptor in catalysis.

This sequence belongs to the PanB family. Homodecamer; pentamer of dimers. Mg(2+) serves as cofactor.

Its subcellular location is the cytoplasm. It catalyses the reaction 3-methyl-2-oxobutanoate + (6R)-5,10-methylene-5,6,7,8-tetrahydrofolate + H2O = 2-dehydropantoate + (6S)-5,6,7,8-tetrahydrofolate. The protein operates within cofactor biosynthesis; (R)-pantothenate biosynthesis; (R)-pantoate from 3-methyl-2-oxobutanoate: step 1/2. In terms of biological role, catalyzes the reversible reaction in which hydroxymethyl group from 5,10-methylenetetrahydrofolate is transferred onto alpha-ketoisovalerate to form ketopantoate. The chain is 3-methyl-2-oxobutanoate hydroxymethyltransferase from Shewanella sediminis (strain HAW-EB3).